The chain runs to 272 residues: ATP synthase subunit a (272 aa).

A run of 5 helical transmembrane segments spans residues 41 to 61 (TLNI…LVLF), 101 to 121 (LIAP…LMDL), 147 to 167 (DVNI…FYSI), 212 to 232 (LFGN…LLPW), and 243 to 263 (AIFH…LTIV).

Belongs to the ATPase A chain family. F-type ATPases have 2 components, CF(1) - the catalytic core - and CF(0) - the membrane proton channel. CF(1) has five subunits: alpha(3), beta(3), gamma(1), delta(1), epsilon(1). CF(0) has three main subunits: a(1), b(2) and c(9-12). The alpha and beta chains form an alternating ring which encloses part of the gamma chain. CF(1) is attached to CF(0) by a central stalk formed by the gamma and epsilon chains, while a peripheral stalk is formed by the delta and b chains.

It is found in the cell inner membrane. In terms of biological role, key component of the proton channel; it plays a direct role in the translocation of protons across the membrane. The sequence is that of ATP synthase subunit a from Cronobacter sakazakii (strain ATCC BAA-894) (Enterobacter sakazakii).